The primary structure comprises 102 residues: Vacuolar ATPase assembly integral membrane protein VMA21 (102 aa).

The Cytoplasmic portion of the chain corresponds to 1 to 30 (MERYDKATLNAAFAPEFRQNEGSLTSTLRT). A helical membrane pass occupies residues 31 to 51 (LLFFTALMITLPVGLYFSSKA). Residues 52 to 66 (YIFEGTLGMSNRDSY) lie on the Lumenal side of the membrane. The helical transmembrane segment at 67-87 (FYAAIVAVVTVHVVLAMFVYV) threads the bilayer. Over 88–102 (AWSEGTRQWREGKQD) the chain is Cytoplasmic.

This sequence belongs to the VMA21 family. Associates with the V0 complex of the vacuolar ATPase (V-ATPase). Interacts with ATP6AP2.

Its subcellular location is the endoplasmic reticulum membrane. The protein localises to the endoplasmic reticulum-Golgi intermediate compartment membrane. It is found in the cytoplasmic vesicle. It localises to the COPII-coated vesicle membrane. Required for the assembly of the V0 complex of the vacuolar ATPase (V-ATPase) in the endoplasmic reticulum. This is Vacuolar ATPase assembly integral membrane protein VMA21 from Gallus gallus (Chicken).